The sequence spans 874 residues: UPF0182 protein Sfum_2137 (874 aa).

Helical transmembrane passes span 7 to 27, 57 to 77, 110 to 130, 171 to 191, 208 to 228, 252 to 272, and 283 to 303; these read WPLIILIGILGISAVVILSSL, IVFGAVTLLFFLIFFLNFWVA, SLWVYTPLSLILAVIIALPIF, RRLLIAFVLLLVGLVALYLLE, LHLSILILLIFLIETWDYVLQ, VIWALIWLTLFFLMGTAFSMI, and PLVVFAVGFVLVLGLRYSAFL.

It belongs to the UPF0182 family.

It is found in the cell membrane. The protein is UPF0182 protein Sfum_2137 of Syntrophobacter fumaroxidans (strain DSM 10017 / MPOB).